A 153-amino-acid polypeptide reads, in one-letter code: Transcriptional repressor NrdR (153 aa).

A zinc finger lies at 3 to 34 (CPSCQHHGTRVLDSRPVDEGRSIRRRRECEQC). Positions 49–139 (LIVVKKQGMR…VYRQFKDLNV (91 aa)) constitute an ATP-cone domain.

Belongs to the NrdR family. The cofactor is Zn(2+).

In terms of biological role, negatively regulates transcription of bacterial ribonucleotide reductase nrd genes and operons by binding to NrdR-boxes. In Geobacillus sp. (strain WCH70), this protein is Transcriptional repressor NrdR.